The chain runs to 338 residues: uncharacterized protein (338 aa).

Residues 111–334 (HLGEERVLVP…LELAEKYNLD (224 aa)) enclose the Radical SAM core domain. 3 residues coordinate [4Fe-4S] cluster: cysteine 129, cysteine 133, and cysteine 136.

The cofactor is [4Fe-4S] cluster.

This is an uncharacterized protein from Methanocaldococcus jannaschii (strain ATCC 43067 / DSM 2661 / JAL-1 / JCM 10045 / NBRC 100440) (Methanococcus jannaschii).